We begin with the raw amino-acid sequence, 149 residues long: Large ribosomal subunit protein bL9 (149 aa).

This sequence belongs to the bacterial ribosomal protein bL9 family.

Binds to the 23S rRNA. The sequence is that of Large ribosomal subunit protein bL9 from Haemophilus influenzae (strain PittGG).